We begin with the raw amino-acid sequence, 376 residues long: Rhodopsin (376 aa).

Residues 1–52 (MSSWSNQPAMDDYGLPSSNPYGNFTVVDMAPKDILHMIHPHWYQYPPMNPMM) lie on the Extracellular side of the membrane. Asn-23 carries N-linked (GlcNAc...) asparagine glycosylation. The chain crosses the membrane as a helical span at residues 53-77 (YPLLLIFMLFTGILCLAGNFVTIWV). Residues 78–89 (FMNTKSLRTPAN) are Cytoplasmic-facing. The helical transmembrane segment at 90-112 (LLVVNLAMSDFLMMFTMFPPMMV) threads the bilayer. Residues 113-126 (TCYYHTWTLGPTFC) lie on the Extracellular side of the membrane. A disulfide bridge links Cys-126 with Cys-203. The chain crosses the membrane as a helical span at residues 127 to 149 (QVYAFLGNLCGCASIWTMVFITF). The 'Ionic lock' involved in activated form stabilization motif lies at 150–152 (DRY). The Cytoplasmic portion of the chain corresponds to 150–168 (DRYNVIVKGVAGEPLSTKK). A helical transmembrane segment spans residues 169–189 (ASLWILTIWVLSITWCIAPFF). Topologically, residues 190-216 (GWNRYVPEGNLTGCGTDYLSEDILSRS) are extracellular. Asn-199 carries an N-linked (GlcNAc...) asparagine glycan. A helical membrane pass occupies residues 217 to 237 (YLYDYSTWVYYLPLLPIYCYV). Residues 238 to 278 (SIIKAVAAHEKGMRDQAKKMGIKSLRNEEAQKTSAECRLAK) are Cytoplasmic-facing. Residues 279-300 (IAMTTVALWFIAWTPYLLINWV) traverse the membrane as a helical segment. Topologically, residues 301-311 (GMFARSYLSPV) are extracellular. The chain crosses the membrane as a helical span at residues 312–333 (YTIWGYVFAKANAVYNPIVYAI). Lys-321 is subject to N6-(retinylidene)lysine. The Cytoplasmic portion of the chain corresponds to 334 to 376 (SHPKYRAAMEKKLPCLSCKTESDDVSESASTTTSSAEEKAESA). The interval 353-376 (TESDDVSESASTTTSSAEEKAESA) is disordered.

The protein belongs to the G-protein coupled receptor 1 family. Opsin subfamily. Homodimer. Interacts with GNAQ. Post-translationally, contains one covalently linked retinal chromophore. Detected on rhabdomere membranes on photoreceptor cells in the retina (at protein level).

The protein resides in the cell projection. Its subcellular location is the rhabdomere membrane. Functionally, photoreceptor required for image-forming vision at low light intensity. Can use both retinal and 3-dehydroretinal as visual pigment. Light-induced isomerization of 11-cis to all-trans retinal triggers a conformational change that activates signaling via G-proteins. Signaling via GNAQ probably mediates the activation of phospholipase C. This chain is Rhodopsin (RHO), found in Procambarus clarkii (Red swamp crayfish).